The following is a 405-amino-acid chain: Histidine decarboxylase (405 aa).

Position 121 (His-121) interacts with substrate. Lys-234 carries the post-translational modification N6-(pyridoxal phosphate)lysine.

This sequence belongs to the group II decarboxylase family. In terms of assembly, homotetramer. Requires pyridoxal 5'-phosphate as cofactor.

The enzyme catalyses L-histidine + H(+) = histamine + CO2. Its pathway is siderophore biosynthesis; pseudomonine biosynthesis. The chain is Histidine decarboxylase from Pseudomonas fluorescens.